The chain runs to 121 residues: MNHAPHLYFAWQQLVEKSQLMLRLATEEQWDELIASEMAYVNAVQEIAHLTEEVDPSTTMQEQLRPMLRLILDNESKVKQLLQIRMDELAKLVGQSSVQKSVLSAYGDQGGFVLAPQDNLF.

Residues methionine 1 to leucine 50 are required for homodimerization. The fliD binding stretch occupies residues methionine 60 to valine 98.

The protein belongs to the FliT family. Homodimer. Interacts with FliD and FlhC.

Its subcellular location is the cytoplasm. The protein resides in the cytosol. Dual-function protein that regulates the transcription of class 2 flagellar operons and that also acts as an export chaperone for the filament-capping protein FliD. As a transcriptional regulator, acts as an anti-FlhDC factor; it directly binds FlhC, thus inhibiting the binding of the FlhC/FlhD complex to class 2 promoters, resulting in decreased expression of class 2 flagellar operons. As a chaperone, effects FliD transition to the membrane by preventing its premature polymerization, and by directing it to the export apparatus. The chain is Flagellar protein FliT from Escherichia coli O157:H7.